A 364-amino-acid chain; its full sequence is Histidinol-phosphate aminotransferase (364 aa).

Lys226 bears the N6-(pyridoxal phosphate)lysine mark.

This sequence belongs to the class-II pyridoxal-phosphate-dependent aminotransferase family. Histidinol-phosphate aminotransferase subfamily. In terms of assembly, homodimer. It depends on pyridoxal 5'-phosphate as a cofactor.

The enzyme catalyses L-histidinol phosphate + 2-oxoglutarate = 3-(imidazol-4-yl)-2-oxopropyl phosphate + L-glutamate. It functions in the pathway amino-acid biosynthesis; L-histidine biosynthesis; L-histidine from 5-phospho-alpha-D-ribose 1-diphosphate: step 7/9. This chain is Histidinol-phosphate aminotransferase, found in Campylobacter jejuni (strain RM1221).